Reading from the N-terminus, the 404-residue chain is Phosphopentomutase (404 aa).

Mn(2+)-binding residues include Asp-10, Asp-303, His-308, Asp-344, His-345, and His-356.

This sequence belongs to the phosphopentomutase family. The cofactor is Mn(2+).

It localises to the cytoplasm. The enzyme catalyses 2-deoxy-alpha-D-ribose 1-phosphate = 2-deoxy-D-ribose 5-phosphate. It catalyses the reaction alpha-D-ribose 1-phosphate = D-ribose 5-phosphate. It functions in the pathway carbohydrate degradation; 2-deoxy-D-ribose 1-phosphate degradation; D-glyceraldehyde 3-phosphate and acetaldehyde from 2-deoxy-alpha-D-ribose 1-phosphate: step 1/2. In terms of biological role, isomerase that catalyzes the conversion of deoxy-ribose 1-phosphate (dRib-1-P) and ribose 1-phosphate (Rib-1-P) to deoxy-ribose 5-phosphate (dRib-5-P) and ribose 5-phosphate (Rib-5-P), respectively. This Shewanella oneidensis (strain ATCC 700550 / JCM 31522 / CIP 106686 / LMG 19005 / NCIMB 14063 / MR-1) protein is Phosphopentomutase.